Reading from the N-terminus, the 550-residue chain is MEEMKPCAANSPPLTPIGFLERAATVYGDCTSIVYGSNTVYTWRETNLRCLRVASSLSSIGIGRSDVVSVLSPNTPAMYELQFAVPMSGAILNNINTRLDARTVSVLLRHCESKLLFVDVFSVDLAVEAVSMMTTDPPILVVIADKEEEGGVADVADLSKFSYTYDDLIERGDPGFKWIRPESEWDPVVLNYTSGTTSAPKGVVHCHRGIFVMSVDSLIDWAVPKNPVYLWTLPIFHSNGWTNPWGIAAVGGTNVCLRKFDAPLIYRLIRDHGVTHMCGAPVVLNMLSATQESQPLNHPVNILTAGSPPPATVLLRAESIGFVISHGYGLTETAGVIVSCAWKPKWNHLPASDRARLKARQGVRTVGFTEIDVVDPESGLSVERNGETVGEIVMRGSSVMLGYLKDPVGTEKALKNGWFYTGDVGVIHSDGYLEIKDRSKDIIITGGENVSSVEVETVLYTIPAVNEVAVVARPDEFWGETPCAFVSLKNGFSGKPTEEELMEYCRKKMPKYMVPKTVSFMDELPKSSTGKVTKFVLRDIAKKMGDKTIS.

The protein belongs to the ATP-dependent AMP-binding enzyme family. Expressed at low levels in roots, leaves, stems and developing seeds.

Its function is as follows. May act as an acid--thiol ligase that activates carboxylic acids by forming acyl-CoAs. The polypeptide is Probable acyl-activating enzyme 6 (AAE6) (Arabidopsis thaliana (Mouse-ear cress)).